The following is a 482-amino-acid chain: 2-succinylbenzoate--CoA ligase (482 aa).

This sequence belongs to the ATP-dependent AMP-binding enzyme family. MenE subfamily.

The enzyme catalyses 2-succinylbenzoate + ATP + CoA = 2-succinylbenzoyl-CoA + AMP + diphosphate. It functions in the pathway quinol/quinone metabolism; 1,4-dihydroxy-2-naphthoate biosynthesis; 1,4-dihydroxy-2-naphthoate from chorismate: step 5/7. The protein operates within quinol/quinone metabolism; menaquinone biosynthesis. Its function is as follows. Converts 2-succinylbenzoate (OSB) to 2-succinylbenzoyl-CoA (OSB-CoA). The polypeptide is 2-succinylbenzoate--CoA ligase (Bacillus cereus (strain ZK / E33L)).